Consider the following 201-residue polypeptide: MSKVLVLKSSILAGYSQSNQLSDYFVEQWREKHSADEITVRDLAANPIPVLDGELVGALRPSDAPLTPRQQEALALSDELIAELKAHDVIVIAAPMYNFNISTQLKNYFDLVARAGVTFRYTEKGPEGLVTGKKAIVITSRGGIHKDGPTDLVTPYLSTFLGFIGITDVKFVFAEGIAYGPEMAAKAQSDAKAAIDSIVAE.

FMN-binding positions include S10, 16-18, 96-99, and 140-143; these read SQS, MYNF, and SRGG.

Belongs to the azoreductase type 1 family. In terms of assembly, homodimer. It depends on FMN as a cofactor.

The enzyme catalyses 2 a quinone + NADH + H(+) = 2 a 1,4-benzosemiquinone + NAD(+). It carries out the reaction N,N-dimethyl-1,4-phenylenediamine + anthranilate + 2 NAD(+) = 2-(4-dimethylaminophenyl)diazenylbenzoate + 2 NADH + 2 H(+). Functionally, quinone reductase that provides resistance to thiol-specific stress caused by electrophilic quinones. In terms of biological role, also exhibits azoreductase activity. Catalyzes the reductive cleavage of the azo bond in aromatic azo compounds to the corresponding amines. The polypeptide is FMN-dependent NADH:quinone oxidoreductase (Escherichia coli O6:K15:H31 (strain 536 / UPEC)).